The primary structure comprises 599 residues: Aspartate--tRNA ligase (599 aa).

Glu175 contributes to the L-aspartate binding site. Residues 199-202 (QQFK) form an aspartate region. L-aspartate-binding residues include Arg221 and His446. Position 221-223 (221-223 (RDE)) interacts with ATP. Residue Glu480 participates in ATP binding. Arg487 contacts L-aspartate. 532–535 (GVDR) is a binding site for ATP.

The protein belongs to the class-II aminoacyl-tRNA synthetase family. Type 1 subfamily. In terms of assembly, homodimer.

The protein resides in the cytoplasm. The catalysed reaction is tRNA(Asp) + L-aspartate + ATP = L-aspartyl-tRNA(Asp) + AMP + diphosphate. Its function is as follows. Catalyzes the attachment of L-aspartate to tRNA(Asp) in a two-step reaction: L-aspartate is first activated by ATP to form Asp-AMP and then transferred to the acceptor end of tRNA(Asp). This chain is Aspartate--tRNA ligase, found in Streptomyces griseus subsp. griseus (strain JCM 4626 / CBS 651.72 / NBRC 13350 / KCC S-0626 / ISP 5235).